Reading from the N-terminus, the 896-residue chain is MIQQYLHIKAQYPDAFLFFRLGDFYELFFDDAIKAAQELEITLTSRDGGDERVPMCGVPYHSAQGYIEQLIEKGYKVAICEQVEDPKTAKGVVRREVVQLITPGTLMEGKGLTEKENHYLAALTPFADGTYGLAYADLSTGEVRLTLLSSWEEAANELHAVGAREIIVATDSGEEWVRELKERYGAAVSYEDDTSLCDEWNGVIGHVAQEKLRQAAARLLHYLVRTQKRRLDHLQPAELYQVDHYMKMDRHSKLHLELVETVRSKGRKGSLLWLLDETVTAMGGRLLKQWLDRPLIDRREIERRLDFVETLKTSYFERQELRDRLRGVYDIERLVGRVSYGNANARDLVQLKKSLLQVPALRQTVGALPLAEADKLCERLDPCEELVDLLERSIQEQPPLSVKEGNLIKDGYDKQLDRYRDASRNGKAWIAELEAKEREATGIKSLKVGYNRVFGYYIEVTKPNLPLVPEGRYERKQTLANAERFITPELKEKEALILEAEEKSIELEYELFVAIREQVKQYIPRLQTLAKAIAELDVLQSFATISDEYRYVRPQFSTERVLVIQGGRHPVVEKVLGAQMYVPNDCYMNREREMLLITGPNMAGKSTYMRQVALTAVMAQIGCFVPAERAVLPIFDQVFTRIGAADDLSAGQSTFMVEMLEARHAIAHATQNSLILFDEIGRGTSTYDGMALAQAIIEYIHDHIGAKTLFSTHYHELTALERSLPRLSNVHARAIEENGKVVFLHQIADGPADKSYGIHVAELAGLPASLIERARAILAELEKAAGKQEAAAGRMDDGALAEAGLAFQGNEALDVGSKVEREKASRPSAGAAREGVLAEAAFEQLSMFPDLAPAPVEPPLSSKEKKALAALKEINLLEMTPLEALNKLYELQKLLK.

Gly599–Ser606 provides a ligand contact to ATP.

It belongs to the DNA mismatch repair MutS family.

This protein is involved in the repair of mismatches in DNA. It is possible that it carries out the mismatch recognition step. This protein has a weak ATPase activity. This chain is DNA mismatch repair protein MutS, found in Geobacillus kaustophilus (strain HTA426).